An 888-amino-acid chain; its full sequence is MSPQLKSLDEEGDKSARRPTRKQTSRAACPQDGHRAQSSRKDPAKGSPRPGSSRKKQMEHGSYHKGLQGQKPRKVERSLQGRKKDRRTSLKEQRASPKKEREALRKEAGKQLRKPRSTSLGSSVSTGDSLSEEELAQILEQVEEKKKLITTVRNKPWPMAKKLRELREAQAFVEKYEGALGKGKGKHLYAYRMMMAKKWVKFKRDFDNFKTQCIPWEMKIKDIESHFGSSVASYFIFLRWMYGVNLVLFGLIFGLVIIPEVLMGMPYGSIPRKTVPRAEEERAMDFSVLWDFEGYIKYSALFYGYYNNQRTIGWLRYRLPMAYFMVGVSVFGYSLMIVIRSMASNTQGSTSEGDSDSFTFSFKMFTSWDYLIGNSETADNKYVSITTSFKESIVDEQESNKEGNIHLTRFLRVLANFLILCCLCGSGYLIYFVVKRSQEFSKMQNVSWYERNEVEIVMSLLGMFCPPLFETIAALENYHPRTGLKWQLGRIFALFLGNLYTFLLALMDDVHLKLSNEEKIKNITHWTLFNYYNSSGGNESVPRPPPHPADVPRGSCWETAVGIEFMRLTVSDMLVTYLTILVGDFLRACFVRFMNHCWCWDLEAGFPSYAEFDISGNVLGLIFNQGMIWMGSFYAPGLVGINVLRLLTSMYFQCWAVMSSNVPHERVFKASRSNNFYMGLLLLVLFLSLLPVAYTVMSLPPSFDCGPFSGKNRMYDVLHETIENDFPKFLGKIFAFLANPGLIIPAILLMFLAIYYLNSVSKSLSRANAQLRKKIQALREVEKNHKSIKGKAIVTYSEDTIKNSSKNATQIHLTKEEPTSHSSSQIQTLDKKAQGPHTSSTEGGASPSTSWHHVGSQPPRGRRDSGQPQSQTYTGRSPSGKRTQRPHN.

The tract at residues 1–128 is disordered; that stretch reads MSPQLKSLDE…SLGSSVSTGD (128 aa). The Cytoplasmic segment spans residues 1–228; that stretch reads MSPQLKSLDE…KIKDIESHFG (228 aa). Composition is skewed to basic and acidic residues over residues 7–16, 32–44, and 87–110; these read SLDEEGDKSA, DGHRAQSSRKDPA, and RTSLKEQRASPKKEREALRKEAGK. Over residues 117–128 the composition is skewed to polar residues; sequence STSLGSSVSTGD. A helical membrane pass occupies residues 229–266; that stretch reads SSVASYFIFLRWMYGVNLVLFGLIFGLVIIPEVLMGMP. Residues 267–317 are Extracellular-facing; it reads YGSIPRKTVPRAEEERAMDFSVLWDFEGYIKYSALFYGYYNNQRTIGWLRY. Residues 318–350 form a helical membrane-spanning segment; it reads RLPMAYFMVGVSVFGYSLMIVIRSMASNTQGST. The Cytoplasmic segment spans residues 351-406; that stretch reads SEGDSDSFTFSFKMFTSWDYLIGNSETADNKYVSITTSFKESIVDEQESNKEGNIH. A helical membrane pass occupies residues 407 to 437; the sequence is LTRFLRVLANFLILCCLCGSGYLIYFVVKRS. Residues 438–447 lie on the Extracellular side of the membrane; sequence QEFSKMQNVS. Residues 448-475 form a helical membrane-spanning segment; that stretch reads WYERNEVEIVMSLLGMFCPPLFETIAAL. Over 476 to 479 the chain is Cytoplasmic; that stretch reads ENYH. The chain crosses the membrane as a helical span at residues 480–514; that stretch reads PRTGLKWQLGRIFALFLGNLYTFLLALMDDVHLKL. At 515 to 556 the chain is on the extracellular side; sequence SNEEKIKNITHWTLFNYYNSSGGNESVPRPPPHPADVPRGSC. A helical membrane pass occupies residues 557–594; that stretch reads WETAVGIEFMRLTVSDMLVTYLTILVGDFLRACFVRFM. Over 595–613 the chain is Cytoplasmic; sequence NHCWCWDLEAGFPSYAEFD. The chain crosses the membrane as a helical span at residues 614 to 634; that stretch reads ISGNVLGLIFNQGMIWMGSFY. The Extracellular portion of the chain corresponds to 635 to 637; sequence APG. A helical membrane pass occupies residues 638 to 660; it reads LVGINVLRLLTSMYFQCWAVMSS. At 661 to 674 the chain is on the cytoplasmic side; the sequence is NVPHERVFKASRSN. A helical membrane pass occupies residues 675 to 698; the sequence is NFYMGLLLLVLFLSLLPVAYTVMS. Residues 699 to 741 lie on the Extracellular side of the membrane; that stretch reads LPPSFDCGPFSGKNRMYDVLHETIENDFPKFLGKIFAFLANPG. The chain crosses the membrane as a helical span at residues 742-775; that stretch reads LIIPAILLMFLAIYYLNSVSKSLSRANAQLRKKI. Topologically, residues 776 to 888 are cytoplasmic; that stretch reads QALREVEKNH…SGKRTQRPHN (113 aa). The segment at 813 to 888 is disordered; sequence LTKEEPTSHS…SGKRTQRPHN (76 aa). Polar residues-rich tracts occupy residues 836–851 and 866–881; these read PHTSSTEGGASPSTSW and GQPQSQTYTGRSPSGK.

Belongs to the TMC family. Forms the MET channel composed of TMC dimer (TMC1 or TMC2), TMIE, TOMT, CIB (CIB2 or CIB3), LHFPL5 and PDH15. The interaction of TMC1 and TMC2 with TOMT is required for the transportation of TMC1/2 into the stereocilia of hair cells. Interacts (via N-terminus) with both isoforms CD1 and CD3 of PCDH15. Can form a heterodimer with TMC1, TMC5 or TMC7. Inner ear and testis. Expressed in cochlear inner and outer hair cells and vestibular organ hair cells.

It is found in the cell membrane. The enzyme catalyses Ca(2+)(in) = Ca(2+)(out). Its function is as follows. Pore-forming subunit of the mechanotransducer (MET) non-selective cation channel complex located at the tips of stereocilia of cochlear hair cells and that mediates sensory transduction in the auditory system. The MET complex is composed of two dimeric pore-forming ion-conducting transmembrane TMC (TMC1 or TMC2) subunits, several auxiliary proteins including LHFPL5, TMIE, CIB2/3 and TOMT, the tip-link PCDH15, and possibly the PIEZO subunits. MET channel is activated by tension in the tip-link extending from the side wall of one stereocilium to the tip of the adjacent shorter stereocilium, where the channel is located. TMC2 MET channel is highly permeable to calcium and likely transports monovalent cations. Also involved in vestibular hair cell transduction current of the mammalian inner ear. This Mus musculus (Mouse) protein is Transmembrane channel-like protein 2.